The following is a 508-amino-acid chain: Histidine ammonia-lyase (508 aa).

A cross-link (5-imidazolinone (Ala-Gly)) is located at residues 143–145 (ASG). 2,3-didehydroalanine (Ser) is present on S144.

The protein belongs to the PAL/histidase family. In terms of processing, contains an active site 4-methylidene-imidazol-5-one (MIO), which is formed autocatalytically by cyclization and dehydration of residues Ala-Ser-Gly.

It localises to the cytoplasm. It carries out the reaction L-histidine = trans-urocanate + NH4(+). It functions in the pathway amino-acid degradation; L-histidine degradation into L-glutamate; N-formimidoyl-L-glutamate from L-histidine: step 1/3. In Klebsiella pneumoniae subsp. pneumoniae (strain ATCC 700721 / MGH 78578), this protein is Histidine ammonia-lyase.